A 194-amino-acid chain; its full sequence is NADH-quinone oxidoreductase subunit B 1 (194 aa).

[4Fe-4S] cluster contacts are provided by Cys73, Cys74, Cys138, and Cys168.

It belongs to the complex I 20 kDa subunit family. NDH-1 is composed of 14 different subunits. Subunits NuoB, C, D, E, F, and G constitute the peripheral sector of the complex. [4Fe-4S] cluster serves as cofactor.

The protein resides in the cell inner membrane. It carries out the reaction a quinone + NADH + 5 H(+)(in) = a quinol + NAD(+) + 4 H(+)(out). In terms of biological role, NDH-1 shuttles electrons from NADH, via FMN and iron-sulfur (Fe-S) centers, to quinones in the respiratory chain. The immediate electron acceptor for the enzyme in this species is believed to be ubiquinone. Couples the redox reaction to proton translocation (for every two electrons transferred, four hydrogen ions are translocated across the cytoplasmic membrane), and thus conserves the redox energy in a proton gradient. The protein is NADH-quinone oxidoreductase subunit B 1 of Rhizobium etli (strain CIAT 652).